We begin with the raw amino-acid sequence, 245 residues long: Probable phosphatase CKO_02035 (245 aa).

Zn(2+)-binding residues include His-7, His-9, His-15, His-40, Glu-73, His-101, His-131, Asp-192, and His-194.

Belongs to the PHP family. In terms of assembly, homotrimer. The cofactor is Zn(2+).

This is Probable phosphatase CKO_02035 from Citrobacter koseri (strain ATCC BAA-895 / CDC 4225-83 / SGSC4696).